A 241-amino-acid chain; its full sequence is Venom nerve growth factor 2 (241 aa).

The N-terminal stretch at 1-18 (MSMLCYTLITAFLIGIWA) is a signal peptide. Positions 19–125 (APKSEDNVPL…SLNRNIRAKR (107 aa)) are excised as a propeptide. Residues 47-67 (GLKTSRNTDQRHPAPQKAEDQ) form a disordered region. Intrachain disulfides connect Cys-139-Cys-203, Cys-181-Cys-231, and Cys-191-Cys-233.

Belongs to the NGF-beta family. In terms of assembly, homodimer; non-covalently linked. As to expression, expressed by the venom gland.

Its subcellular location is the secreted. Its function is as follows. Nerve growth factor is important for the development and maintenance of the sympathetic and sensory nervous systems. It stimulates division and differentiation of sympathetic and embryonic sensory neurons as well as basal forebrain cholinergic neurons in the brain. Its relevance in the snake venom is not clear. However, it has been shown to inhibit metalloproteinase-dependent proteolysis of platelet glycoprotein Ib alpha, suggesting a metalloproteinase inhibition to prevent metalloprotease autodigestion and/or protection against prey proteases. Binds a lipid between the two protein chains in the homodimer. The lipid-bound form promotes histamine relase from mouse mast cells, contrary to the lipid-free form. The chain is Venom nerve growth factor 2 from Naja sputatrix (Malayan spitting cobra).